The primary structure comprises 223 residues: Adenylate kinase (223 aa).

10–15 (GSGKGT) is an ATP binding site. Positions 30–59 (ESGAIFREHIGGGTELGMKAKGYIDKGELV) are NMP. Residues S31, R36, 57–59 (ELV), 84–87 (GFPR), and Q91 each bind AMP. An LID region spans residues 125–164 (GRRLCANDPNHPNNIFIDAIKPNGDKCRVCGGDLKTRSDD). R126 contributes to the ATP binding site. The AMP site is built by R161 and R173. G209 contributes to the ATP binding site.

It belongs to the adenylate kinase family. As to quaternary structure, monomer.

The protein resides in the cytoplasm. The enzyme catalyses AMP + ATP = 2 ADP. It participates in purine metabolism; AMP biosynthesis via salvage pathway; AMP from ADP: step 1/1. In terms of biological role, catalyzes the reversible transfer of the terminal phosphate group between ATP and AMP. Plays an important role in cellular energy homeostasis and in adenine nucleotide metabolism. This chain is Adenylate kinase, found in Solidesulfovibrio magneticus (strain ATCC 700980 / DSM 13731 / RS-1) (Desulfovibrio magneticus).